A 37-amino-acid chain; its full sequence is MKVRSSVKKRCAKCKIIRRKGRVMVICEIPSHKQRQG.

This sequence belongs to the bacterial ribosomal protein bL36 family.

The chain is Large ribosomal subunit protein bL36 from Aquifex aeolicus (strain VF5).